Reading from the N-terminus, the 384-residue chain is MSSVPAPREYFLDSIRAWLMLLGIPFHISLIYSTHSWHVNSAAPSWWLTLFNDFIHAFRMQVFFVISGYFSYMLFLRYPLKRWWKVRVERVGIPMLTAIPLLTLPQFILLQYVKEKTENWPTLSAYEKYNTLAWELISHLWFLLVLVILTTVSIGIFTWFQKRQETSKPRPAAISLAKLSLIFFLLGIAYAAIRRIIFIVYPAILSDGMFNFIVMQTLFYVPFFILGALAFIHPDLKARFTTPSRGCTLGAAVAFIAYLLNQRYGSGDAWMYETESVITMVMGLWMVNVVFSLGHRLLNFQSARVTYFVNASLFIYLVHHPLTLFFGAYITPHITSNLIGFLCGLIFVMGIALILYEIHLRIPLLKFLFSGKPPVKQESRAAIG.

Transmembrane regions (helical) follow at residues 17–37, 54–74, 91–111, 140–160, 173–193, 212–232, 240–260, 274–294, 311–331, and 338–358; these read AWLM…THSW, FIHA…SYML, VGIP…ILLQ, LWFL…FTWF, AISL…YAAI, FIVM…LAFI, FTTP…AYLL, TESV…FSLG, ASLF…AYIT, and LIGF…LYEI.

The protein belongs to the acyltransferase 3 family. OpgC subfamily.

The protein localises to the cell membrane. It participates in glycan metabolism; osmoregulated periplasmic glucan (OPG) biosynthesis. Functionally, necessary for the succinyl substitution of periplasmic glucans. Could catalyze the transfer of succinyl residues from the cytoplasmic side of the membrane to the nascent glucan backbones on the periplasmic side of the membrane. This is Glucans biosynthesis protein C from Salmonella schwarzengrund (strain CVM19633).